We begin with the raw amino-acid sequence, 575 residues long: Suppressor of tumorigenicity 7 protein-like (575 aa).

2 helical membrane passes run glycine 36 to leucine 56 and phenylalanine 80 to tryptophan 100. A disordered region spans residues glycine 125 to glutamine 147. Residues threonine 126–serine 137 are compositionally biased toward polar residues.

Belongs to the ST7 family.

The protein localises to the membrane. This is Suppressor of tumorigenicity 7 protein-like (ST7L) from Homo sapiens (Human).